The chain runs to 276 residues: Secretagogin (276 aa).

6 consecutive EF-hand domains span residues leucine 12–lysine 47, aspartate 71–asparagine 93, aspartate 105–histidine 140, lysine 149–phenylalanine 184, glutamate 197–leucine 232, and valine 240–proline 276. The Ca(2+) site is built by aspartate 71, serine 73, aspartate 75, cysteine 77, glutamate 82, aspartate 118, aspartate 120, serine 122, glutamate 129, aspartate 162, asparagine 164, aspartate 166, arginine 168, aspartate 173, aspartate 210, serine 212, threonine 214, glutamate 221, aspartate 254, asparagine 256, aspartate 258, lysine 260, and glutamate 265.

The protein resides in the cytoplasm. It is found in the secreted. Its subcellular location is the cytoplasmic vesicle. The protein localises to the secretory vesicle membrane. This is Secretagogin (SCGN) from Bos taurus (Bovine).